The sequence spans 229 residues: tRNA (guanine-N(7)-)-methyltransferase (229 aa).

Positions 59, 84, 111, and 134 each coordinate S-adenosyl-L-methionine. Asp134 is an active-site residue. Lys138 is a substrate binding site. Residues 140-145 are interaction with RNA; the sequence is KHNKRR. Substrate-binding positions include Asp170 and 207–210; that span reads TKFE.

Belongs to the class I-like SAM-binding methyltransferase superfamily. TrmB family.

The catalysed reaction is guanosine(46) in tRNA + S-adenosyl-L-methionine = N(7)-methylguanosine(46) in tRNA + S-adenosyl-L-homocysteine. It participates in tRNA modification; N(7)-methylguanine-tRNA biosynthesis. Functionally, catalyzes the formation of N(7)-methylguanine at position 46 (m7G46) in tRNA. This is tRNA (guanine-N(7)-)-methyltransferase from Saccharophagus degradans (strain 2-40 / ATCC 43961 / DSM 17024).